A 968-amino-acid polypeptide reads, in one-letter code: RNA polymerase-associated protein RapA (968 aa).

The Helicase ATP-binding domain maps to 164–334 (DVGRRHAPRV…FARLRLLDPN (171 aa)). 177-184 (DEVGLGKT) contributes to the ATP binding site. The DEAH box motif lies at 280-283 (DEAH). The Helicase C-terminal domain maps to 490 to 662 (RVEWLMGYLT…YLASPDETEG (173 aa)).

It belongs to the SNF2/RAD54 helicase family. RapA subfamily. Interacts with the RNAP. Has a higher affinity for the core RNAP than for the holoenzyme. Its ATPase activity is stimulated by binding to RNAP.

In terms of biological role, transcription regulator that activates transcription by stimulating RNA polymerase (RNAP) recycling in case of stress conditions such as supercoiled DNA or high salt concentrations. Probably acts by releasing the RNAP, when it is trapped or immobilized on tightly supercoiled DNA. Does not activate transcription on linear DNA. Probably not involved in DNA repair. This is RNA polymerase-associated protein RapA from Escherichia coli O127:H6 (strain E2348/69 / EPEC).